Here is a 97-residue protein sequence, read N- to C-terminus: Serine protease inhibitor Kazal-type 13 (97 aa).

The first 26 residues, Met1 to Ala26, serve as a signal peptide directing secretion. A Kazal-like domain is found at Asn36 to Glu97. Disulfide bonds link Cys42–Cys78, Cys56–Cys75, and Cys64–Cys96.

Restricted to the epididymis, with highest levels in the initial segment, including epithelial cells, lumen, and sperm (at protein level). Localizes to the sperm heads, where it is restricted to the acrosomal region in epididymal spermatozoa, but not in testicular spermatozoa (at protein level).

It localises to the secreted. Its function is as follows. May be a serine protease inhibitor. Essential for sperm maturation and fertility. Inhibits sperm acrosome reaction, protecting sperm from premature reaction. In Rattus norvegicus (Rat), this protein is Serine protease inhibitor Kazal-type 13 (Spink13).